Consider the following 535-residue polypeptide: Alkaline phosphatase, placental type (535 aa).

A signal peptide spans 1–22; it reads MLGPCMLLLLLLLGLRLQLSLG. Aspartate 64 is a binding site for Mg(2+). Zn(2+) contacts are provided by aspartate 64 and serine 114. Serine 114 (phosphoserine intermediate) is an active-site residue. An intrachain disulfide couples cysteine 143 to cysteine 205. Residue asparagine 144 is glycosylated (N-linked (GlcNAc...) asparagine). Residue serine 177 participates in Mg(2+) binding. Ca(2+) is bound at residue glutamate 238. Asparagine 271 is a glycosylation site (N-linked (GlcNAc...) asparagine). Phenylalanine 291, glutamate 292, and aspartate 307 together coordinate Ca(2+). A Mg(2+)-binding site is contributed by glutamate 333. Residues aspartate 338, histidine 342, aspartate 379, and histidine 380 each coordinate Zn(2+). The disordered stretch occupies residues 425–449; that stretch reads DGARPDVTESESGSPEYRQQSAVPL. A compositionally biased stretch (polar residues) spans 434–446; sequence SESGSPEYRQQSA. Residue histidine 454 coordinates Zn(2+). Cysteine 489 and cysteine 496 are disulfide-bonded. Aspartate 506 carries the GPI-anchor amidated aspartate lipid modification. Residues 507–535 constitute a propeptide, removed in mature form; sequence AAHPGRSVVPALLPLLAGTLLLLETATAP. A helical membrane pass occupies residues 513–529; the sequence is SVVPALLPLLAGTLLLL.

Belongs to the alkaline phosphatase family. Homodimer. It depends on Mg(2+) as a cofactor. Requires Zn(2+) as cofactor. The cofactor is Ca(2+). In terms of tissue distribution, detected in placenta (at protein level).

The protein localises to the cell membrane. It carries out the reaction a phosphate monoester + H2O = an alcohol + phosphate. Functionally, alkaline phosphatase that can hydrolyze various phosphate compounds. This is Alkaline phosphatase, placental type from Homo sapiens (Human).